Consider the following 307-residue polypeptide: uncharacterized protein (307 aa).

2 stretches are compositionally biased toward basic and acidic residues: residues 42-52 and 112-121; these read TCRSPGEDKCP and QKKEEPEGSH. A disordered region spans residues 42–153; sequence TCRSPGEDKC…VPPAVASASA (112 aa). Basic residues predominate over residues 129–139; it reads KQHKKAKKRKS.

This is an uncharacterized protein from Mus musculus (Mouse).